The primary structure comprises 119 residues: Large ribosomal subunit protein uL24 (119 aa).

It belongs to the universal ribosomal protein uL24 family. Part of the 50S ribosomal subunit.

Functionally, one of two assembly initiator proteins, it binds directly to the 5'-end of the 23S rRNA, where it nucleates assembly of the 50S subunit. Its function is as follows. Located at the polypeptide exit tunnel on the outside of the subunit. This is Large ribosomal subunit protein uL24 from Methanosarcina acetivorans (strain ATCC 35395 / DSM 2834 / JCM 12185 / C2A).